We begin with the raw amino-acid sequence, 173 residues long: Nucleoside-triphosphatase THEP1 (173 aa).

ATP-binding positions include 9 to 16 and 97 to 104; these read GPPGVGKT and LYVIDEVG.

The protein belongs to the THEP1 NTPase family.

It catalyses the reaction a ribonucleoside 5'-triphosphate + H2O = a ribonucleoside 5'-diphosphate + phosphate + H(+). Functionally, has nucleotide phosphatase activity towards ATP, GTP, CTP, TTP and UTP. May hydrolyze nucleoside diphosphates with lower efficiency. This chain is Nucleoside-triphosphatase THEP1, found in Caldivirga maquilingensis (strain ATCC 700844 / DSM 13496 / JCM 10307 / IC-167).